We begin with the raw amino-acid sequence, 319 residues long: Ribonucleoside-diphosphate reductase small chain (319 aa).

Positions 70, 101, and 104 each coordinate Fe cation. Tyrosine 108 is a catalytic residue. Glutamate 163, glutamate 197, and histidine 200 together coordinate Fe cation. The tract at residues 313–319 (FSLDVDF) is interaction with R1.

Belongs to the ribonucleoside diphosphate reductase small chain family. Interacts with RNR1/OPG080 subunit. Can interact with host RNR1 supunit. It depends on Fe cation as a cofactor.

The catalysed reaction is a 2'-deoxyribonucleoside 5'-diphosphate + [thioredoxin]-disulfide + H2O = a ribonucleoside 5'-diphosphate + [thioredoxin]-dithiol. Ribonucleoside-diphosphate reductase holoenzyme provides the precursors necessary for viral DNA synthesis. Allows virus growth in non-dividing cells. Catalyzes the biosynthesis of deoxyribonucleotides from the corresponding ribonucleotides. This is Ribonucleoside-diphosphate reductase small chain (OPG048) from Variola virus.